The chain runs to 428 residues: Enolase (428 aa).

Position 163 (Q163) interacts with (2R)-2-phosphoglycerate. E205 functions as the Proton donor in the catalytic mechanism. D242, E285, and D311 together coordinate Mg(2+). The (2R)-2-phosphoglycerate site is built by K336, R365, S366, and K387. K336 acts as the Proton acceptor in catalysis.

It belongs to the enolase family. It depends on Mg(2+) as a cofactor.

The protein localises to the cytoplasm. It is found in the secreted. Its subcellular location is the cell surface. The enzyme catalyses (2R)-2-phosphoglycerate = phosphoenolpyruvate + H2O. Its pathway is carbohydrate degradation; glycolysis; pyruvate from D-glyceraldehyde 3-phosphate: step 4/5. Functionally, catalyzes the reversible conversion of 2-phosphoglycerate (2-PG) into phosphoenolpyruvate (PEP). It is essential for the degradation of carbohydrates via glycolysis. This Desulfatibacillum aliphaticivorans protein is Enolase.